The following is a 154-amino-acid chain: Large ribosomal subunit protein uL13 (154 aa).

It belongs to the universal ribosomal protein uL13 family. As to quaternary structure, part of the 50S ribosomal subunit.

In terms of biological role, this protein is one of the early assembly proteins of the 50S ribosomal subunit, although it is not seen to bind rRNA by itself. It is important during the early stages of 50S assembly. The polypeptide is Large ribosomal subunit protein uL13 (Rhizobium leguminosarum bv. trifolii (strain WSM2304)).